A 218-amino-acid chain; its full sequence is Sulfite reductase, assimilatory-type (218 aa).

4 residues coordinate [4Fe-4S] cluster: Cys-91, Cys-97, Cys-131, and Cys-135. Cys-135 contributes to the siroheme binding site.

Its function is as follows. This enzyme catalyzes the 6-electron reduction of sulfite to sulfide. This is one of several activities required for the biosynthesis of L-cysteine from sulfate. This is Sulfite reductase, assimilatory-type from Nitratidesulfovibrio vulgaris (strain ATCC 29579 / DSM 644 / CCUG 34227 / NCIMB 8303 / VKM B-1760 / Hildenborough) (Desulfovibrio vulgaris).